The following is a 417-amino-acid chain: uncharacterized protein (417 aa).

It belongs to the MG032/MG096/MG288 family.

This is an uncharacterized protein from Mycoplasma pneumoniae (strain ATCC 29342 / M129 / Subtype 1) (Mycoplasmoides pneumoniae).